The following is a 337-amino-acid chain: Tryptophan--tRNA ligase (337 aa).

Residues 11–13 and 19–20 contribute to the ATP site; these read QPT and GN. The short motif at 12–20 is the 'HIGH' region element; that stretch reads PTGNLHLGN. D135 serves as a coordination point for L-tryptophan. ATP contacts are provided by residues 147–149, V190, and 199–203; these read GED and KMSKS. Residues 199–203 carry the 'KMSKS' region motif; that stretch reads KMSKS.

This sequence belongs to the class-I aminoacyl-tRNA synthetase family. In terms of assembly, homodimer.

The protein localises to the cytoplasm. The catalysed reaction is tRNA(Trp) + L-tryptophan + ATP = L-tryptophyl-tRNA(Trp) + AMP + diphosphate + H(+). Functionally, catalyzes the attachment of tryptophan to tRNA(Trp). The polypeptide is Tryptophan--tRNA ligase (Synechocystis sp. (strain ATCC 27184 / PCC 6803 / Kazusa)).